Consider the following 515-residue polypeptide: uncharacterized protein (515 aa).

Residues 146–171 form a disordered region; sequence SSEVDRNSETEGTREENSNTSDWDEQ. Over residues 148-162 the composition is skewed to basic and acidic residues; the sequence is EVDRNSETEGTREEN.

It localises to the cytoplasm. Its subcellular location is the nucleus. This is an uncharacterized protein from Schizosaccharomyces pombe (strain 972 / ATCC 24843) (Fission yeast).